We begin with the raw amino-acid sequence, 941 residues long: Gamma-aminobutyric acid type B receptor subunit 2 (941 aa).

The signal sequence occupies residues 1 to 41 (MASPRSSGQPGPPPPPPPPPARLLLLLLLPLLLPLAPGAWG). The Extracellular segment spans residues 42–483 (WARGAPRPPP…LRKISLPLYS (442 aa)). Asn-90 is a glycosylation site (N-linked (GlcNAc...) asparagine). 3 disulfides stabilise this stretch: Cys-108/Cys-135, Cys-237/Cys-266, and Cys-265/Cys-302. Residues Asn-298, Asn-389, Asn-404, and Asn-453 are each glycosylated (N-linked (GlcNAc...) asparagine). Residues 484–504 (ILSALTILGMIMASAFLFFNI) traverse the membrane as a helical segment. Residues 505-522 (KNRNQKLIKMSSPYMNNL) lie on the Cytoplasmic side of the membrane. A helical membrane pass occupies residues 523–543 (IILGGMLSYASIFLFGLDGSF). Over 544 to 551 (VSEKTFET) the chain is Extracellular. Residues 552–572 (LCTVRTWILTVGYTTAFGAMF) traverse the membrane as a helical segment. Residues 573–597 (AKTWRVHAIFKNVKMKKKIIKDQKL) lie on the Cytoplasmic side of the membrane. The chain crosses the membrane as a helical span at residues 598-618 (LVIVGGMLLIDLCILICWQAV). The Extracellular portion of the chain corresponds to 619 to 654 (DPLRRTVEKYSMEPDPAGRDISIRPLLEHCENTHMT). The chain crosses the membrane as a helical span at residues 655 to 675 (IWLGIVYAYKGLLMLFGCFLA). At 676 to 691 (WETRNVSIPALNDSKY) the chain is on the cytoplasmic side. Residues 692–712 (IGMSVYNVGIMCIIGAAVSFL) form a helical membrane-spanning segment. Over 713–720 (TRDQPNVQ) the chain is Extracellular. Residues 721–741 (FCIVALVIIFCSTITLCLVFV) form a helical membrane-spanning segment. The Cytoplasmic segment spans residues 742–941 (PKLITLRTNP…PSFRVMVSGL (200 aa)). Positions 763–790 (TQNQKKEDSKTSTSVTSVNQASTSRLEG) are disordered. Positions 773-787 (TSTSVTSVNQASTSR) are enriched in polar residues. Ser-776 and Ser-779 each carry phosphoserine. A coiled-coil region spans residues 781 to 819 (NQASTSRLEGLQSENHRLRMKITELDKDLEEVTMQLQDT). Position 819 is a phosphothreonine (Thr-819). A phosphoserine mark is found at Ser-884, Ser-893, Ser-913, Ser-916, Ser-920, and Ser-924.

It belongs to the G-protein coupled receptor 3 family. GABA-B receptor subfamily. Heterodimer of GABBR1 and GABBR2. Homodimers may form, but are inactive. Interacts (via C-terminus) with ATF4 (via leucine zipper domain). In terms of tissue distribution, highly expressed in brain, especially in cerebral cortex, thalamus, hippocampus, frontal, occipital and temporal lobe, occipital pole and cerebellum, followed by corpus callosum, caudate nucleus, spinal cord, amygdala and medulla. Weakly expressed in heart, testis and skeletal muscle.

It localises to the cell membrane. Its subcellular location is the postsynaptic cell membrane. Component of a heterodimeric G-protein coupled receptor for GABA, formed by GABBR1 and GABBR2. Within the heterodimeric GABA receptor, only GABBR1 seems to bind agonists, while GABBR2 mediates coupling to G proteins. Ligand binding causes a conformation change that triggers signaling via guanine nucleotide-binding proteins (G proteins) and modulates the activity of down-stream effectors, such as adenylate cyclase. Signaling inhibits adenylate cyclase, stimulates phospholipase A2, activates potassium channels, inactivates voltage-dependent calcium-channels and modulates inositol phospholipid hydrolysis. Plays a critical role in the fine-tuning of inhibitory synaptic transmission. Pre-synaptic GABA receptor inhibits neurotransmitter release by down-regulating high-voltage activated calcium channels, whereas postsynaptic GABA receptor decreases neuronal excitability by activating a prominent inwardly rectifying potassium (Kir) conductance that underlies the late inhibitory postsynaptic potentials. Not only implicated in synaptic inhibition but also in hippocampal long-term potentiation, slow wave sleep, muscle relaxation and antinociception. This is Gamma-aminobutyric acid type B receptor subunit 2 (GABBR2) from Homo sapiens (Human).